The chain runs to 740 residues: NAD(P)H-quinone oxidoreductase subunit 5, chloroplastic (740 aa).

Helical transmembrane passes span 9–29 (WIIP…LLLF), 40–60 (WSFL…YLSI), 89–109 (IDPL…FVLI), 125–145 (FAYM…SNLI), 147–167 (IYFF…FWFT), 185–205 (GDFG…SFEF), 221–241 (VNLL…IAKS), 258–278 (TPIS…FLVA), 283–303 (LFIV…ITIL), 327–347 (LGYM…FHLI), 354–374 (ALLF…VGYS), 396–416 (TAFL…CFWS), 425–445 (LLFS…TAFY), 547–567 (ILFP…IGIP), 606–626 (FSVS…KPFY), and 718–738 (ISSY…FLKI).

This sequence belongs to the complex I subunit 5 family. NDH is composed of at least 16 different subunits, 5 of which are encoded in the nucleus.

The protein localises to the plastid. It is found in the chloroplast thylakoid membrane. The catalysed reaction is a plastoquinone + NADH + (n+1) H(+)(in) = a plastoquinol + NAD(+) + n H(+)(out). It carries out the reaction a plastoquinone + NADPH + (n+1) H(+)(in) = a plastoquinol + NADP(+) + n H(+)(out). NDH shuttles electrons from NAD(P)H:plastoquinone, via FMN and iron-sulfur (Fe-S) centers, to quinones in the photosynthetic chain and possibly in a chloroplast respiratory chain. The immediate electron acceptor for the enzyme in this species is believed to be plastoquinone. Couples the redox reaction to proton translocation, and thus conserves the redox energy in a proton gradient. In Aethionema grandiflorum (Persian stone-cress), this protein is NAD(P)H-quinone oxidoreductase subunit 5, chloroplastic (ndhF).